A 664-amino-acid chain; its full sequence is uncharacterized protein (664 aa).

Positions 1–35 (MGVSVLTFHVSLFLKRILSIAFFLLSLSTLLRIVN) are cleaved as a signal peptide. Residues Asn101 and Asn138 are each glycosylated (N-linked (GlcNAc...) asparagine). Sel1-like repeat units lie at residues 141–178 (AFAN…KQGS) and 179–214 (LDAH…DHLF). N-linked (GlcNAc...) asparagine glycans are attached at residues Asn221, Asn300, and Asn371. Sel1-like repeat units follow at residues 337 to 372 (AQSC…TKND), 373 to 409 (SNSY…MNEN), 410 to 441 (PHAL…TQKS), and 442 to 477 (VISY…EAIR). N-linked (GlcNAc...) asparagine glycosylation is found at Asn454 and Asn537. Sel1-like repeat units lie at residues 564–599 (IDAI…EQSS) and 601–636 (GMGL…SNQN).

This sequence belongs to the sel-1 family.

This is an uncharacterized protein from Schizosaccharomyces pombe (strain 972 / ATCC 24843) (Fission yeast).